The primary structure comprises 501 residues: Glycerol kinase (501 aa).

ADP is bound at residue T17. ATP contacts are provided by T17, T18, and S19. Position 17 (T17) interacts with sn-glycerol 3-phosphate. R21 provides a ligand contact to ADP. Sn-glycerol 3-phosphate is bound by residues R87, E88, Y139, and D243. R87, E88, Y139, D243, and Q244 together coordinate glycerol. Residues T265 and G308 each contribute to the ADP site. 4 residues coordinate ATP: T265, G308, Q312, and G409. Residues G409 and N413 each coordinate ADP.

This sequence belongs to the FGGY kinase family.

It carries out the reaction glycerol + ATP = sn-glycerol 3-phosphate + ADP + H(+). It functions in the pathway polyol metabolism; glycerol degradation via glycerol kinase pathway; sn-glycerol 3-phosphate from glycerol: step 1/1. Its activity is regulated as follows. Inhibited by fructose 1,6-bisphosphate (FBP). Key enzyme in the regulation of glycerol uptake and metabolism. Catalyzes the phosphorylation of glycerol to yield sn-glycerol 3-phosphate. This Pseudomonas fluorescens (strain ATCC BAA-477 / NRRL B-23932 / Pf-5) protein is Glycerol kinase.